The chain runs to 546 residues: CTP synthase (546 aa).

The interval Met-1–Leu-269 is amidoligase domain. Position 16 (Ser-16) interacts with CTP. Ser-16 provides a ligand contact to UTP. Residues Ser-17 to Val-22 and Asp-74 each bind ATP. Positions 74 and 143 each coordinate Mg(2+). CTP-binding positions include Asp-150–Glu-152, Lys-190–Gln-195, and Lys-226. UTP is bound by residues Lys-190–Gln-195 and Lys-226. The Glutamine amidotransferase type-1 domain maps to Thr-294–Asn-546. Gly-356 lines the L-glutamine pocket. Cys-383 serves as the catalytic Nucleophile; for glutamine hydrolysis. L-glutamine is bound by residues Leu-384 to Gln-387, Glu-407, and Arg-474. Active-site residues include His-519 and Glu-521.

This sequence belongs to the CTP synthase family. Homotetramer.

It carries out the reaction UTP + L-glutamine + ATP + H2O = CTP + L-glutamate + ADP + phosphate + 2 H(+). The catalysed reaction is L-glutamine + H2O = L-glutamate + NH4(+). It catalyses the reaction UTP + NH4(+) + ATP = CTP + ADP + phosphate + 2 H(+). The protein operates within pyrimidine metabolism; CTP biosynthesis via de novo pathway; CTP from UDP: step 2/2. Its activity is regulated as follows. Allosterically activated by GTP, when glutamine is the substrate; GTP has no effect on the reaction when ammonia is the substrate. The allosteric effector GTP functions by stabilizing the protein conformation that binds the tetrahedral intermediate(s) formed during glutamine hydrolysis. Inhibited by the product CTP, via allosteric rather than competitive inhibition. Its function is as follows. Catalyzes the ATP-dependent amination of UTP to CTP with either L-glutamine or ammonia as the source of nitrogen. Regulates intracellular CTP levels through interactions with the four ribonucleotide triphosphates. This Francisella tularensis subsp. tularensis (strain FSC 198) protein is CTP synthase.